The chain runs to 509 residues: Phosphoprotein (509 aa).

Disordered stretches follow at residues 33–84, 131–236, and 256–281; these read LESW…LGFR, VQAN…DGNS, and PESRWESSERNASVGSVPKSARSAKT. Polar residues predominate over residues 44-65; sequence GRATPNPDTSEGDHQNINQSCS. The span at 146 to 157 shows a compositional bias: acidic residues; sequence DGSDDSDVDSGP. Ser151 is subject to Phosphoserine. Basic and acidic residues predominate over residues 178-187; that stretch reads RSTDVEKLEG. A compositionally biased stretch (polar residues) spans 221 to 236; the sequence is SRPSAQSIKKGTDGNS. Residues 303 to 376 form a multimerization region; it reads SEFEYEDDLF…LSSIMIAIPG (74 aa). An interaction with the nucleocapsid (N-RNA) region spans residues 459-509; it reads SSRSVIRSIIKSSKLNIDHKDYLLDLLNDVKGSKDLKEFHKMLTAILAKQP.

It belongs to the morbillivirus P protein family. Homotetramer. Interacts (via multimerization domain) with polymerase L; this interaction forms the polymerase L-P complex. Interacts (via N-terminus) with N0 (via Ncore); this interaction allows P to chaperon N0 to avoid N polymerization before encapsidation. Interacts (via C-terminus) with N-RNA template; this interaction positions the polymerase on the template for both transcription and replication. Interacts with host ISG15; this interaction disrupts the activity of the N0-P complex. Phosphorylation on serines by host CK2 is necessary for the formation of viral factories.

Its function is as follows. Essential cofactor of the RNA polymerase L that plays a central role in the transcription and replication by forming the polymerase complex with RNA polymerase L and recruiting L to the genomic N-RNA template for RNA synthesis. Also plays a central role in the encapsidation of nascent RNA chains by forming the encapsidation complex with the nucleocapsid protein N (N-P complex). Acts as a chaperone for newly synthesized free N protein, so-called N0, allowing encapsidation of nascent RNA chains during replication. The nucleoprotein protein N prevents excessive phosphorylation of P, which leads to down-regulation of viral transcription/ replication. Participates, together with N, in the formation of viral factories (viroplasms), which are large inclusions in the host cytoplasm where replication takes place. In Capra hircus (Goat), this protein is Phosphoprotein (P/V).